A 437-amino-acid chain; its full sequence is Nickel-cobalt-cadmium resistance protein NccC (437 aa).

Positions 1–48 (MGAVLKAEANIFRSHPFRPMNQATPKKLRSAPCIGVALLLMATGSIQA) are cleaved as a signal peptide.

It belongs to the outer membrane factor (OMF) (TC 1.B.17) family.

Its function is as follows. Component of the NCC cation-efflux system that confers resistance to nickel, cobalt and cadmium. The sequence is that of Nickel-cobalt-cadmium resistance protein NccC (nccC) from Alcaligenes xylosoxydans xylosoxydans (Achromobacter xylosoxidans).